The chain runs to 708 residues: MLKLFSAFRKNKIWDFNGGIHPPEMKTQSNGTPLRQVPLAQRFVIPLKQHIGAEGELCVSVGDKVLRGQPLTRGRGKMLPVHAPTSGTVTAIAPHSTAHPSALAELSVIIDADGEDCWIPRDGWADYRSRSREELIERIHQFGVAGLGGAGFPTGVKLQGGGDKIETLIINAAECEPYITADDRLMQDCAAQVVEGIRILAHILQPREILIGIEDNKPQAISMLRAVLADSHDISLRVIPTKYPSGGAKQLTYILTGKQVPHGGRSSDIGVLMQNVGTAYAVKRAVIDGEPITERVVTLTGEAIARPGNVWARLGTPVRHLLNDAGFCPSADQMVIMGGPLMGFTLPWLDVPVVKITNCLLAPSANELGEPQEEQSCIRCSACADACPADLLPQQLYWFSKGQQHDKATTHNIADCIECGACAWVCPSNIPLVQYFRQEKAEIAAIRQEEKRAAEAKARFEARQARLEREKAARLERHKSAAVQPAAKDKDAIAAALARVKEKQAQATQPIVIKAGERPDNSAIIAAREARKAQARAKQAELQQTNDAATVADPRKTAVEAAIARAKARKLEQQQANAEPEEQIDPRKAAVEAAIARAKARKLEQQQANAEPEEQIDPRKAAVEAAIARAKARKLEQQQANAEPEEQIDPRKAAVEAAIARAKARKLEQQQANAEPEEQIDPRKAAVAAAIARVQAKKAAQQKVVNED.

4Fe-4S ferredoxin-type domains lie at 369–397 (GEPQ…QQLY) and 407–436 (KATT…VQYF). The [4Fe-4S] cluster site is built by Cys-377, Cys-380, Cys-383, Cys-387, Cys-416, Cys-419, Cys-422, and Cys-426. The interval 630-682 (AKARKLEQQQANAEPEEQIDPRKAAVEAAIARAKARKLEQQQANAEPEEQIDP) is disordered.

Belongs to the 4Fe4S bacterial-type ferredoxin family. RnfC subfamily. As to quaternary structure, the complex is composed of six subunits: RsxA, RsxB, RsxC, RsxD, RsxE and RsxG. [4Fe-4S] cluster serves as cofactor.

The protein resides in the cell inner membrane. Part of a membrane-bound complex that couples electron transfer with translocation of ions across the membrane. Required to maintain the reduced state of SoxR. This chain is Ion-translocating oxidoreductase complex subunit C, found in Escherichia coli (strain UTI89 / UPEC).